Reading from the N-terminus, the 428-residue chain is Adenylosuccinate synthetase, chloroplastic (428 aa).

GTP is bound by residues 17-23 and 45-47; these read GDEGKGK and GHT. The Proton acceptor role is filled by aspartate 18. Aspartate 18 and glycine 45 together coordinate Mg(2+). IMP contacts are provided by residues 18–21, 43–46, threonine 135, arginine 149, asparagine 226, threonine 241, and arginine 305; these read DEGK and NAGH. Residue histidine 46 is the Proton donor of the active site. 301 to 307 contributes to the substrate binding site; the sequence is TTTGRPR. GTP is bound by residues arginine 307, 333-335, and 416-418; these read KLD and GVG.

The protein belongs to the adenylosuccinate synthetase family. In terms of assembly, homodimer. It depends on Mg(2+) as a cofactor.

Its subcellular location is the plastid. It is found in the chloroplast. The catalysed reaction is IMP + L-aspartate + GTP = N(6)-(1,2-dicarboxyethyl)-AMP + GDP + phosphate + 2 H(+). It functions in the pathway purine metabolism; AMP biosynthesis via de novo pathway; AMP from IMP: step 1/2. Plays an important role in the de novo pathway and in the salvage pathway of purine nucleotide biosynthesis. Catalyzes the first committed step in the biosynthesis of AMP from IMP. This chain is Adenylosuccinate synthetase, chloroplastic, found in Ostreococcus lucimarinus (strain CCE9901).